Here is a 64-residue protein sequence, read N- to C-terminus: Small, acid-soluble spore protein H (64 aa).

The protein belongs to the SspH family.

It localises to the spore core. This chain is Small, acid-soluble spore protein H, found in Acetivibrio thermocellus (strain ATCC 27405 / DSM 1237 / JCM 9322 / NBRC 103400 / NCIMB 10682 / NRRL B-4536 / VPI 7372) (Clostridium thermocellum).